The following is a 495-amino-acid chain: Thioredoxin reductase SEP1 (495 aa).

37 to 54 is an FAD binding site; that stretch reads DFVKPSPPGTTWGLGGTC. A disulfide bond links Cys-54 and Cys-59. Catalysis depends on His-468, which acts as the Proton acceptor. A cross-link (cysteinyl-selenocysteine (Cys-Sec)) is located at residues 493-494; that stretch reads CU. Position 494 (Sec-494) is a non-standard amino acid, selenocysteine.

This sequence belongs to the class-I pyridine nucleotide-disulfide oxidoreductase family. As to quaternary structure, homodimer. The cofactor is FAD. Post-translationally, the N-terminus is blocked.

It catalyses the reaction [thioredoxin]-dithiol + NADP(+) = [thioredoxin]-disulfide + NADPH + H(+). Activity was very low in selenium-depleted cells, but increased 4-fold to the same level as in selenium-sufficient cells for 70 hours after the addition of 10 nm selenite. The protein is Thioredoxin reductase SEP1 (SEP1) of Emiliania huxleyi (Coccolithophore).